Reading from the N-terminus, the 336-residue chain is Pentalenene synthase (336 aa).

5 residues coordinate Mg(2+): Asp-80, Asp-84, Asn-219, Ser-223, and Glu-227. The DDXXD motif motif lies at 80–84; sequence DDLFD.

This sequence belongs to the terpene synthase family. In terms of assembly, monomer. Mg(2+) serves as cofactor.

It carries out the reaction (2E,6E)-farnesyl diphosphate = pentalenene + diphosphate. Its pathway is antibiotic biosynthesis; neopentalenolactone biosynthesis. Functionally, catalyzes the cyclization of farnesyl diphosphate (FPP) to the tricyclic sesquiterpene pentalenene in the biosynthesis of neopentalenolactone antibiotic. This chain is Pentalenene synthase (ptlA), found in Streptomyces avermitilis (strain ATCC 31267 / DSM 46492 / JCM 5070 / NBRC 14893 / NCIMB 12804 / NRRL 8165 / MA-4680).